The sequence spans 278 residues: Small ribosomal subunit protein uS3 (278 aa).

The KH type-2 domain maps to 38–106 (IRKLLSKGME…QVQLNILEVK (69 aa)). The disordered stretch occupies residues 213–278 (RQAQAAARAG…APAPAENQEG (66 aa)). The segment covering 214–223 (QAQAAARAGV) has biased composition (low complexity). Residues 232–253 (RGGERPSRGSRGDRPTRADRGG) are compositionally biased toward basic and acidic residues. A compositionally biased stretch (low complexity) spans 259–278 (EATGAATEQAAPAPAENQEG).

This sequence belongs to the universal ribosomal protein uS3 family. In terms of assembly, part of the 30S ribosomal subunit. Forms a tight complex with proteins S10 and S14.

Binds the lower part of the 30S subunit head. Binds mRNA in the 70S ribosome, positioning it for translation. The chain is Small ribosomal subunit protein uS3 from Nocardioides sp. (strain ATCC BAA-499 / JS614).